The chain runs to 130 residues: Fluoride-specific ion channel FluC (130 aa).

4 consecutive transmembrane segments (helical) span residues 2–22 (GLLL…RFAL), 35–55 (IGIL…AAFL), 72–92 (LFVT…LDIL), and 107–127 (ILVS…FIMG). Residues glycine 79 and threonine 82 each contribute to the Na(+) site.

It belongs to the fluoride channel Fluc/FEX (TC 1.A.43) family.

It is found in the cell inner membrane. The catalysed reaction is fluoride(in) = fluoride(out). With respect to regulation, na(+) is not transported, but it plays an essential structural role and its presence is essential for fluoride channel function. Functionally, fluoride-specific ion channel. Important for reducing fluoride concentration in the cell, thus reducing its toxicity. The chain is Fluoride-specific ion channel FluC from Francisella philomiragia subsp. philomiragia (strain ATCC 25017 / CCUG 19701 / FSC 153 / O#319-036).